We begin with the raw amino-acid sequence, 440 residues long: Calcium/calmodulin-regulated receptor-like kinase 1 (440 aa).

Residues L8–F28 form a helical membrane-spanning segment. The segment at F28 to G228 is calmodulin binding. The region spanning C113–I380 is the Protein kinase domain. ATP-binding positions include I119–V127 and K141. Y186 is subject to Phosphotyrosine. Residue D237 is the Proton acceptor of the active site. S241 is modified (phosphoserine). The residue at position 274 (T274) is a Phosphothreonine. Y282 carries the post-translational modification Phosphotyrosine. Residues M369–L440 form a calmodulin binding region. The segment at R386 to D427 is disordered. Pro residues predominate over residues S394–I405.

This sequence belongs to the protein kinase superfamily. Ser/Thr protein kinase family. In terms of assembly, interacts with calmodulin (CaM) in a calcium- (Ca(2+)-) dependent manner. Binds to MEKK1. In terms of tissue distribution, similar transcript expression levels in seedlings, roots, leaves, stems and flowers, and lower levels in siliques, but protein accumulates mostly in 7-day-old seedlings, old roots and young leaves and, to a lower extent, in young roots, old leaves, flowers and siliques (at protein level).

The protein localises to the cell membrane. The protein resides in the endosome membrane. The enzyme catalyses L-seryl-[protein] + ATP = O-phospho-L-seryl-[protein] + ADP + H(+). It catalyses the reaction L-threonyl-[protein] + ATP = O-phospho-L-threonyl-[protein] + ADP + H(+). Its activity is regulated as follows. Kinase activity is stimulated by calcium/calmodulin, but blocked by chlorpromazine. Functionally, required for cold tolerance, via the activation of MAP kinases activity. Phosphorylates and activates MEKK1 in response to cold in a calcium-dependent manner. The polypeptide is Calcium/calmodulin-regulated receptor-like kinase 1 (Arabidopsis thaliana (Mouse-ear cress)).